The chain runs to 157 residues: Putative low molecular weight protein-tyrosine-phosphatase slr0328 (157 aa).

Cys7 serves as the catalytic Nucleophile. The active site involves Arg13. Residue Asp124 is the Proton donor of the active site.

The protein belongs to the low molecular weight phosphotyrosine protein phosphatase family.

It catalyses the reaction O-phospho-L-tyrosyl-[protein] + H2O = L-tyrosyl-[protein] + phosphate. This Synechocystis sp. (strain ATCC 27184 / PCC 6803 / Kazusa) protein is Putative low molecular weight protein-tyrosine-phosphatase slr0328.